A 462-amino-acid chain; its full sequence is tRNA modification GTPase MnmE (462 aa).

3 residues coordinate (6S)-5-formyl-5,6,7,8-tetrahydrofolate: arginine 23, glutamate 88, and arginine 127. Residues 224 to 383 (GLATVIIGRP…LEKAIADLFF (160 aa)) enclose the TrmE-type G domain. A K(+)-binding site is contributed by asparagine 234. GTP is bound by residues 234 to 239 (NVGKSS), 253 to 259 (TDIPGTT), and 278 to 281 (DTAG). Serine 238 lines the Mg(2+) pocket. Threonine 253, isoleucine 255, and threonine 258 together coordinate K(+). Threonine 259 contributes to the Mg(2+) binding site. Lysine 462 lines the (6S)-5-formyl-5,6,7,8-tetrahydrofolate pocket.

The protein belongs to the TRAFAC class TrmE-Era-EngA-EngB-Septin-like GTPase superfamily. TrmE GTPase family. Homodimer. Heterotetramer of two MnmE and two MnmG subunits. K(+) serves as cofactor.

The protein resides in the cytoplasm. Exhibits a very high intrinsic GTPase hydrolysis rate. Involved in the addition of a carboxymethylaminomethyl (cmnm) group at the wobble position (U34) of certain tRNAs, forming tRNA-cmnm(5)s(2)U34. The polypeptide is tRNA modification GTPase MnmE (Geobacillus thermodenitrificans (strain NG80-2)).